Consider the following 290-residue polypeptide: 4-hydroxybenzoate octaprenyltransferase (290 aa).

The next 8 membrane-spanning stretches (helical) occupy residues 23–43 (IGAL…TPGM), 46–66 (LWIL…GCVV), 99–119 (LFVV…AMTI), 141–161 (LPQV…FAAV), 163–183 (ESLP…AVAY), 212–232 (TLII…IGWL), 233–253 (NGLG…FVYQ), and 268–288 (AFMN…MSYW).

It belongs to the UbiA prenyltransferase family. Requires Mg(2+) as cofactor.

Its subcellular location is the cell inner membrane. It carries out the reaction all-trans-octaprenyl diphosphate + 4-hydroxybenzoate = 4-hydroxy-3-(all-trans-octaprenyl)benzoate + diphosphate. It functions in the pathway cofactor biosynthesis; ubiquinone biosynthesis. Its function is as follows. Catalyzes the prenylation of para-hydroxybenzoate (PHB) with an all-trans polyprenyl group. Mediates the second step in the final reaction sequence of ubiquinone-8 (UQ-8) biosynthesis, which is the condensation of the polyisoprenoid side chain with PHB, generating the first membrane-bound Q intermediate 3-octaprenyl-4-hydroxybenzoate. This Salmonella paratyphi C (strain RKS4594) protein is 4-hydroxybenzoate octaprenyltransferase.